Reading from the N-terminus, the 100-residue chain is uncharacterized protein (100 aa).

Positions 1-18 (MWGFLVLKARWLVTPVRT) are cleaved as a signal peptide. The interval 48 to 86 (LTRGVIRVSPQERSQQNQSAPKGPTPSTRPKPRTLGPQA) is disordered. Residues 58–69 (QERSQQNQSAPK) show a composition bias toward polar residues. The N-linked (GlcNAc...) asparagine glycan is linked to asparagine 64.

Its subcellular location is the secreted. This is an uncharacterized protein from Homo sapiens (Human).